A 592-amino-acid polypeptide reads, in one-letter code: Bifunctional purine biosynthesis protein ATIC (592 aa).

At methionine 1 the chain carries N-acetylmethionine. In terms of domain architecture, MGS-like spans methionine 1–cysteine 146. The tract at residues methionine 1–serine 198 is IMP cyclohydrolase. IMP-binding positions include serine 12 to lysine 14, serine 34 to threonine 37, arginine 64 to threonine 67, cysteine 101 to asparagine 102, and aspartate 125 to isoleucine 126. Catalysis depends on lysine 137, which acts as the Proton donor/acceptor; for FAICAR cyclization activity. Lysine 199 carries the N6-acetyllysine modification. Positions lysine 199–histidine 592 are AICAR formyltransferase. 5-amino-1-(5-phospho-beta-D-ribosyl)imidazole-4-carboxamide contacts are provided by residues arginine 207–tyrosine 208, histidine 267, glycine 316, aspartate 339, asparagine 431, and arginine 451. The active-site Proton acceptor; for AICAR formyltransferase activity is histidine 267. Isoleucine 452 contacts (6R)-10-formyltetrahydrofolate. A 5-amino-1-(5-phospho-beta-D-ribosyl)imidazole-4-carboxamide-binding site is contributed by phenylalanine 541. (6R)-10-formyltetrahydrofolate is bound by residues aspartate 546 and serine 565–alanine 566. A 5-amino-1-(5-phospho-beta-D-ribosyl)imidazole-4-carboxamide-binding site is contributed by arginine 588.

Belongs to the PurH family. Homodimer. Associates with internalized INSR complexes on Golgi/endosomal membranes. Interacts with INSR; ATIC together with PRKAA2/AMPK2 and HACD3/PTPLAD1 is proposed to be part of a signaling network regulating INSR autophosphorylation and endocytosis.

It localises to the cytoplasm. The protein resides in the cytosol. The catalysed reaction is (6R)-10-formyltetrahydrofolate + 5-amino-1-(5-phospho-beta-D-ribosyl)imidazole-4-carboxamide = 5-formamido-1-(5-phospho-D-ribosyl)imidazole-4-carboxamide + (6S)-5,6,7,8-tetrahydrofolate. The enzyme catalyses 10-formyldihydrofolate + 5-amino-1-(5-phospho-beta-D-ribosyl)imidazole-4-carboxamide = 5-formamido-1-(5-phospho-D-ribosyl)imidazole-4-carboxamide + 7,8-dihydrofolate. It catalyses the reaction IMP + H2O = 5-formamido-1-(5-phospho-D-ribosyl)imidazole-4-carboxamide. The protein operates within purine metabolism; IMP biosynthesis via de novo pathway; 5-formamido-1-(5-phospho-D-ribosyl)imidazole-4-carboxamide from 5-amino-1-(5-phospho-D-ribosyl)imidazole-4-carboxamide (10-formyl THF route): step 1/1. It functions in the pathway purine metabolism; IMP biosynthesis via de novo pathway; IMP from 5-formamido-1-(5-phospho-D-ribosyl)imidazole-4-carboxamide: step 1/1. Its activity is regulated as follows. AMP and XMP inhibit AICAR formyltransferase activity. In terms of biological role, bifunctional enzyme that catalyzes the last two steps of purine biosynthesis. Acts as a transformylase that incorporates a formyl group to the AMP analog AICAR (5-amino-1-(5-phospho-beta-D-ribosyl)imidazole-4-carboxamide) to produce the intermediate formyl-AICAR (FAICAR). Can use both 10-formyldihydrofolate and 10-formyltetrahydrofolate as the formyl donor in this reaction. Also catalyzes the cyclization of FAICAR to inosine monophosphate (IMP). Promotes insulin receptor/INSR autophosphorylation and is involved in INSR internalization. The sequence is that of Bifunctional purine biosynthesis protein ATIC (ATIC) from Pongo abelii (Sumatran orangutan).